The following is a 382-amino-acid chain: Opsin-VA (382 aa).

Over 1-35 (MELFPVAVNGVSHAEDPFSGPLTFIAPWNYKVLAT) the chain is Extracellular. The helical transmembrane segment at 36–56 (LMFVVTAASLSENFAVMLVTF) threads the bilayer. Residues 57-67 (RFTQLRKPLNY) are Cytoplasmic-facing. Residues 68-88 (IIVNLSLADFLVSLTGGTISF) form a helical membrane-spanning segment. Residues 89–103 (LTNYHGYFFLGKWAC) are Extracellular-facing. Residues C103 and C180 are joined by a disulfide bond. The helical transmembrane segment at 104–124 (VLEGFAVTYFGIVALWSLAVL) threads the bilayer. The Cytoplasmic segment spans residues 125–147 (AFERFFVICRPLGNIRLRGKHAA). Residues 148 to 168 (LGLLFVWTFSFIWTIPPVLGW) form a helical membrane-spanning segment. Over 169–193 (SSYTVSKIGTTCEPNWYSGNFHDHT) the chain is Extracellular. A helical membrane pass occupies residues 194-214 (FIIAFFITCFILPLGVIVVCY). Topologically, residues 215–244 (CKLIKKLRKVSNTHGRLGNARKPERQVTRM) are cytoplasmic. Residues 245-265 (VVVMIVAFMVAWTPYAAFSIV) form a helical membrane-spanning segment. Over 266-279 (VTAHPSIHLDPRLA) the chain is Extracellular. The chain crosses the membrane as a helical span at residues 280-300 (AAPAFFSKTAAVYNPVIYVFM). K287 is modified (N6-(retinylidene)lysine). Over 301–382 (NKQFRKCLVQ…PIPENKVCPM (82 aa)) the chain is Cytoplasmic. The segment covering 330–346 (RQGMTNESHTGEMSTIA) has biased composition (polar residues). The segment at 330-371 (RQGMTNESHTGEMSTIASRIPKDGSIPEKTQEHPGERRSLAH) is disordered. The span at 349–368 (IPKDGSIPEKTQEHPGERRS) shows a compositional bias: basic and acidic residues.

The protein belongs to the G-protein coupled receptor 1 family. Opsin subfamily. In terms of tissue distribution, expressed in a subset of retinal horizontal cells as well as in retinal ganglion cells.

Its subcellular location is the membrane. This Rutilus rutilus (Roach) protein is Opsin-VA.